A 513-amino-acid chain; its full sequence is Pantetheinase (513 aa).

An N-terminal signal peptide occupies residues 1 to 21; the sequence is MTTQLPAYVAILLFYVSRASC. The N-linked (GlcNAc...) asparagine glycan is linked to asparagine 38. Residues 39-306 form the CN hydrolase domain; that stretch reads ATLTPVSREE…GKLLLSQLDS (268 aa). The Proton acceptor role is filled by glutamate 79. N-linked (GlcNAc...) asparagine glycosylation is present at asparagine 130. The active-site Proton donor is lysine 178. Asparagine 200 is a glycosylation site (N-linked (GlcNAc...) asparagine). Cysteine 211 functions as the Nucleophile in the catalytic mechanism. Asparagine 283, asparagine 315, and asparagine 353 each carry an N-linked (GlcNAc...) asparagine glycan. Glycine 491 carries the GPI-anchor amidated glycine lipid modification. Positions 492 to 513 are cleaved as a propeptide — removed in mature form; that stretch reads LTAQARIIMLIVIAPIVCSLSW.

It belongs to the carbon-nitrogen hydrolase superfamily. BTD/VNN family. As to quaternary structure, monomer. Widely expressed with higher expression in spleen, kidney and blood. Overexpressed in lesional psoriatic skin.

Its subcellular location is the cell membrane. The enzyme catalyses (R)-pantetheine + H2O = cysteamine + (R)-pantothenate. Functionally, amidohydrolase that hydrolyzes specifically one of the carboamide linkages in D-pantetheine thus recycling pantothenic acid (vitamin B5) and releasing cysteamine. The protein is Pantetheinase (VNN1) of Homo sapiens (Human).